The following is a 512-amino-acid chain: Glucose-6-phosphate 1-dehydrogenase (512 aa).

Residues Arg-61, 103-104 (EF), and Lys-171 contribute to the NADP(+) site. Positions 201, 205, 239, and 258 each coordinate substrate. Residue His-263 is the Proton acceptor of the active site. Lys-360 and Lys-365 together coordinate substrate. The disordered stretch occupies residues 479–512 (QDSSPSFPNYPAGSSGPKEADALIERDGRSWRPL). A compositionally biased stretch (basic and acidic residues) spans 496–512 (KEADALIERDGRSWRPL).

This sequence belongs to the glucose-6-phosphate dehydrogenase family.

The enzyme catalyses D-glucose 6-phosphate + NADP(+) = 6-phospho-D-glucono-1,5-lactone + NADPH + H(+). Its pathway is carbohydrate degradation; pentose phosphate pathway; D-ribulose 5-phosphate from D-glucose 6-phosphate (oxidative stage): step 1/3. Catalyzes the oxidation of glucose 6-phosphate to 6-phosphogluconolactone. The polypeptide is Glucose-6-phosphate 1-dehydrogenase (Chlamydia pneumoniae (Chlamydophila pneumoniae)).